The primary structure comprises 79 residues: UPF0154 protein Lm4b_01315 (79 aa).

A helical transmembrane segment spans residues 2-22; it reads WIYILVGIICLLAGLAGGFFI. The segment covering 57–66 has biased composition (polar residues); it reads KINQMMSAMN. The interval 57-79 is disordered; it reads KINQMMSAMNKQQEKEKPKKTKK.

This sequence belongs to the UPF0154 family.

It localises to the cell membrane. This is UPF0154 protein Lm4b_01315 from Listeria monocytogenes serotype 4b (strain CLIP80459).